The primary structure comprises 137 residues: Large ribosomal subunit protein uL16 (137 aa).

The protein belongs to the universal ribosomal protein uL16 family. Part of the 50S ribosomal subunit.

In terms of biological role, binds 23S rRNA and is also seen to make contacts with the A and possibly P site tRNAs. In Rhizobium meliloti (strain 1021) (Ensifer meliloti), this protein is Large ribosomal subunit protein uL16.